A 100-amino-acid chain; its full sequence is Small ribosomal subunit protein uS14m (100 aa).

The protein belongs to the universal ribosomal protein uS14 family.

It localises to the mitochondrion. The polypeptide is Small ribosomal subunit protein uS14m (RPS14) (Vicia faba (Broad bean)).